The primary structure comprises 218 residues: Probable nicotinate-nucleotide adenylyltransferase (218 aa).

The protein belongs to the NadD family.

The enzyme catalyses nicotinate beta-D-ribonucleotide + ATP + H(+) = deamido-NAD(+) + diphosphate. It functions in the pathway cofactor biosynthesis; NAD(+) biosynthesis; deamido-NAD(+) from nicotinate D-ribonucleotide: step 1/1. Its function is as follows. Catalyzes the reversible adenylation of nicotinate mononucleotide (NaMN) to nicotinic acid adenine dinucleotide (NaAD). This chain is Probable nicotinate-nucleotide adenylyltransferase, found in Syntrophotalea carbinolica (strain DSM 2380 / NBRC 103641 / GraBd1) (Pelobacter carbinolicus).